The chain runs to 125 residues: uncharacterized protein (125 aa).

A helical membrane pass occupies residues 21–43 (KFSLIALVSFTALAIIVLYHNIS).

It localises to the membrane. This is an uncharacterized protein from Archaeoglobus fulgidus (strain ATCC 49558 / DSM 4304 / JCM 9628 / NBRC 100126 / VC-16).